A 221-amino-acid chain; its full sequence is Ribosomal RNA large subunit methyltransferase E (221 aa).

S-adenosyl-L-methionine-binding residues include Gly-60, Trp-62, Asp-89, Asp-105, and Asp-134. The Proton acceptor role is filled by Lys-174.

This sequence belongs to the class I-like SAM-binding methyltransferase superfamily. RNA methyltransferase RlmE family.

The protein localises to the cytoplasm. It carries out the reaction uridine(2552) in 23S rRNA + S-adenosyl-L-methionine = 2'-O-methyluridine(2552) in 23S rRNA + S-adenosyl-L-homocysteine + H(+). Functionally, specifically methylates the uridine in position 2552 of 23S rRNA at the 2'-O position of the ribose in the fully assembled 50S ribosomal subunit. In Cupriavidus taiwanensis (strain DSM 17343 / BCRC 17206 / CCUG 44338 / CIP 107171 / LMG 19424 / R1) (Ralstonia taiwanensis (strain LMG 19424)), this protein is Ribosomal RNA large subunit methyltransferase E.